Reading from the N-terminus, the 337-residue chain is ATP-dependent 6-phosphofructokinase (337 aa).

Glycine 11 lines the ATP pocket. An ADP-binding site is contributed by 21–25 (RAVVR). ATP contacts are provided by residues 72-73 (RY) and 102-105 (GDGS). Mg(2+) is bound at residue aspartate 103. A substrate-binding site is contributed by 125 to 127 (TID). Aspartate 127 acts as the Proton acceptor in catalysis. Arginine 154 is an ADP binding site. Residues arginine 162 and 169-171 (MGR) each bind substrate. ADP is bound by residues 185-187 (GAD), arginine 212, and 214-216 (KNH). Substrate is bound by residues glutamate 223, arginine 245, and 251–254 (HILR).

Belongs to the phosphofructokinase type A (PFKA) family. ATP-dependent PFK group I subfamily. Prokaryotic clade 'B1' sub-subfamily. In terms of assembly, homotetramer. Requires Mg(2+) as cofactor.

The protein resides in the cytoplasm. The enzyme catalyses beta-D-fructose 6-phosphate + ATP = beta-D-fructose 1,6-bisphosphate + ADP + H(+). The protein operates within carbohydrate degradation; glycolysis; D-glyceraldehyde 3-phosphate and glycerone phosphate from D-glucose: step 3/4. With respect to regulation, allosterically activated by ADP and other diphosphonucleosides, and allosterically inhibited by phosphoenolpyruvate. Its function is as follows. Catalyzes the phosphorylation of D-fructose 6-phosphate to fructose 1,6-bisphosphate by ATP, the first committing step of glycolysis. This Streptococcus equi subsp. zooepidemicus (strain H70) protein is ATP-dependent 6-phosphofructokinase.